The sequence spans 330 residues: MGTTTTHKFDRPLRLPPLPCPFPSEVNPYVEQVDKETLEWLIDSEMLDDAETVERYRQAKYGWLSARTYPYAEHHTLRLVSDWCVWLFAFDDAFCESDRRAAEIARALPQLYAVLEDLDVGSEVDDVFAKSLLEIKGRIAAYGDDEQLDRWRNVTKDYLFAQVWEAANREDEVVPSLEDYIFMRRRTGAMLTVFALIDVASGRSLSADEWRHPGMRAITESANDVVVWDNDLISYAKESNSGNSRNNLVNVLAEHRHYSRQEAMEEIGEMRNQAIADMVAVRPSLEALGSDAVLAYVRGLEFWISGSVDYSLTSSRYTDAWRTARQPSIR.

Mg(2+)-binding residues include Asp91 and Glu96. The DDXXXE motif motif lies at 91-96; sequence DDAFCE. Position 184 (Arg184) interacts with substrate. The Mg(2+) site is built by Asn230 and Ser234. Substrate is bound at residue Lys237. Glu238 serves as a coordination point for Mg(2+). 316-317 is a substrate binding site; that stretch reads RY.

Belongs to the terpene synthase family. It depends on Mg(2+) as a cofactor.

It carries out the reaction (2E,6E)-farnesyl diphosphate + H2O = 4-epi-cubebol + diphosphate. Its pathway is secondary metabolite biosynthesis; terpenoid biosynthesis. In terms of biological role, catalyzes the conversion of (2E,6E)-farnesyl diphosphate (FPP) to yield the bicyclic sesquiterpenol 4-epi-cubebol via a 1,10-cyclization, which requires the abstraction of the pyrophosphate from FPP to yield a (E,E)-germacradienyl cation. The only accepted substrate is (2E,6E)-farnesyl diphosphate (FPP). In Streptosporangium roseum (strain ATCC 12428 / DSM 43021 / JCM 3005 / KCTC 9067 / NCIMB 10171 / NRRL 2505 / NI 9100), this protein is 4-epi-cubebol synthase ((2E,6E)-farnesyl diphosphate cyclizing).